Reading from the N-terminus, the 125-residue chain is Glycine cleavage system H protein (125 aa).

In terms of domain architecture, Lipoyl-binding spans 19–101; sequence EVTVGITDHA…YHEGWLVKLK (83 aa). Residue K60 is modified to N6-lipoyllysine.

It belongs to the GcvH family. As to quaternary structure, the glycine cleavage system is composed of four proteins: P, T, L and H. It depends on (R)-lipoate as a cofactor.

Functionally, the glycine cleavage system catalyzes the degradation of glycine. The H protein shuttles the methylamine group of glycine from the P protein to the T protein. In Legionella pneumophila (strain Corby), this protein is Glycine cleavage system H protein.